The primary structure comprises 185 residues: Ribosome-recycling factor (185 aa).

This sequence belongs to the RRF family.

Its subcellular location is the cytoplasm. Functionally, responsible for the release of ribosomes from messenger RNA at the termination of protein biosynthesis. May increase the efficiency of translation by recycling ribosomes from one round of translation to another. The sequence is that of Ribosome-recycling factor from Alkaliphilus oremlandii (strain OhILAs) (Clostridium oremlandii (strain OhILAs)).